The chain runs to 57 residues: Protein CgkB (57 aa).

The chain is Protein CgkB (cgkB) from Pseudoalteromonas carrageenovora (Alteromonas carrageenovora).